Consider the following 59-residue polypeptide: U-scoloptoxin(23)-Er2a (59 aa).

The protein belongs to the scoloptoxin-23 family. Contains 1 disulfide bond. In terms of tissue distribution, expressed by the venom gland.

It is found in the secreted. This Ethmostigmus rubripes (Giant centipede) protein is U-scoloptoxin(23)-Er2a.